Reading from the N-terminus, the 187-residue chain is Homeobox expressed in ES cells 1-B (187 aa).

Positions 110 to 169 form a DNA-binding region, homeobox; the sequence is GRRPRTAFTRSQIEILENVFRVNSYPGIDVREELASKLALDEDRIQIWFQNRRAKLKRSH.

The protein belongs to the ANF homeobox family. As to quaternary structure, the N-terminus interacts with the LIM 2 domain of zyx. In terms of tissue distribution, first expressed at a low level in the late blastula stage (stage 9) in most cells of the animal half of the embryo. Following this, predominantly expressed in two zones; the dorsal blastopore lip (Spemann organizer) at the beginning of gastrulation, and subsequently in the anterior part of the neural anlage (the region of future forebrain).

It is found in the nucleus. Its function is as follows. Regulates the earliest stages of development of the anterior neural plate. Plays a role in forebrain development by inhibiting the expression of otx2 and pax6 in the rostral region of the anterior neural plate. Necessary for both neural differentiation and neural patterning. Controls Spemann organizer development. May act as a transcriptional repressor. This Xenopus laevis (African clawed frog) protein is Homeobox expressed in ES cells 1-B (hesx1-b).